The following is a 384-amino-acid chain: Early estrogen-induced gene 1 protein (384 aa).

Residues 2-145 (AFLMKKKKFK…ILKVTIGMFL (144 aa)) enclose the C2 NT-type domain. The interval 129 to 138 (NTRQDNSILK) is required for interaction with TNFRSF11A/RANK. The tract at residues 173–315 (LTCKGGGTSS…RRKKDSVESH (143 aa)) is disordered. The span at 183 to 193 (GGSSTNSLTGS) shows a compositional bias: low complexity. A compositionally biased stretch (polar residues) spans 227 to 254 (SRNSSYASQQSKISGYSTEHSRSSSLSD). Composition is skewed to basic and acidic residues over residues 280–292 (GSER…EKPP) and 299–315 (HLSD…VESH).

Belongs to the EEIG family. In terms of assembly, part of a complex composed of EEIG1, TNFRSF11A/RANK, PLCG2, GAB2, TEC and BTK; complex formation increases in the presence of TNFSF11/RANKL. Interacts with PRDM1/BLIMP1; following TNFSF11/RANKL stimulation in bone marrow-derived macrophages, the interaction promotes the binding of PRDM1/BLIMP1 to the gene promoter of IRF8.

The protein localises to the nucleus. It is found in the cytoplasm. Its subcellular location is the membrane raft. In terms of biological role, key component of TNFSF11/RANKL- and TNF-induced osteoclastogenesis pathways, thereby mediates bone resorption in pathological bone loss conditions. Required for TNFSF11/RANKL-induced osteoclastogenesis via its interaction with TNFRSF11A/RANK, thereby facilitates the downsteam transcription of NFATC1 and activation of PLCG2. Facilitates recruitment of the transcriptional repressor PRDM1/BLIMP1 to the promoter of the anti-osteoclastogenesis gene IRF8, thereby resulting in transcription of osteoclast differentiation factors. May play a role in estrogen action. This chain is Early estrogen-induced gene 1 protein, found in Homo sapiens (Human).